The sequence spans 41 residues: Large ribosomal subunit protein bL36 (41 aa).

The protein belongs to the bacterial ribosomal protein bL36 family.

The chain is Large ribosomal subunit protein bL36 from Methylorubrum extorquens (strain CM4 / NCIMB 13688) (Methylobacterium extorquens).